Reading from the N-terminus, the 1359-residue chain is NPC1-like intracellular cholesterol transporter 1 (1359 aa).

An N-terminal signal peptide occupies residues 1-21 (MAEAGLRGWLLWALLLRLAQS). At 22–284 (EPYTTIHQPG…TFYLGQMPGS (263 aa)) the chain is on the extracellular side. Intrachain disulfides connect Cys-33/Cys-90, Cys-39/Cys-57, Cys-78/Cys-125, Cys-91/Cys-129, Cys-113/Cys-254, Cys-116/Cys-172, Cys-189/Cys-197, Cys-243/Cys-259, and Cys-256/Cys-263. Asn-54 carries an N-linked (GlcNAc...) asparagine glycan. Residues Asn-132 and Asn-138 are each glycosylated (N-linked (GlcNAc...) asparagine). Asn-244 carries N-linked (GlcNAc...) asparagine glycosylation. The helical transmembrane segment at 285–305 (LVLIIILCSVFAVVTILLVGF) threads the bilayer. Residues 306–351 (RVAPARDKSKMVDPKKGTSLSDKLSFSTHTLLGQFFQGWGTWVASW) are Cytoplasmic-facing. Residues 352–372 (PLTILVLSVIPVVALAAGLVF) form a helical membrane-spanning segment. The Extracellular segment spans residues 373-632 (TELTTDPVEL…DEINRTTAED (260 aa)). N-linked (GlcNAc...) asparagine glycans are attached at residues Asn-416, Asn-431, Asn-464, Asn-479, Asn-497, and Asn-506. Cys-471 and Cys-485 are joined by a disulfide. Cysteines 525 and 542 form a disulfide. Asn-626 is a glycosylation site (N-linked (GlcNAc...) asparagine). Residues 632–797 (DLPIFATSYI…MSAFVALLSL (166 aa)) form the SSD domain. The chain crosses the membrane as a helical span at residues 633 to 653 (LPIFATSYIVIFLYISLALGS). At 654–666 (YSSWSRVMVDSKA) the chain is on the cytoplasmic side. Residues 667–687 (TLGLGGVAVVLGAVMAAMGFF) form a helical membrane-spanning segment. At 688–696 (SYLGIRSSL) the chain is on the extracellular side. The chain crosses the membrane as a helical span at residues 697 to 717 (VILQVVPFLVLSVGADNIFIF). Topologically, residues 718–742 (VLEYQRLPRRPGEPREVHIGRALGR) are cytoplasmic. A helical membrane pass occupies residues 743 to 763 (VAPSMLLCSLSEAICFFLGAL). The Extracellular segment spans residues 764–776 (TPMPAVRTFALTS). A helical transmembrane segment spans residues 777–797 (GLAVILDFLLQMSAFVALLSL). The Cytoplasmic portion of the chain corresponds to 798 to 846 (DSKRQEASRLDVCCCVKPQELPPPGQGEGLLLGFFQKAYAPFLLHWITR). The helical transmembrane segment at 847–867 (GVVLLLFLALFGVSLYSMCHI) threads the bilayer. The Extracellular segment spans residues 868-1139 (SVGLDQELAL…EQYLTILPEG (272 aa)). Disulfide bonds link Cys-920–Cys-925, Cys-966–Cys-1024, and Cys-980–Cys-989. A helical membrane pass occupies residues 1140 to 1160 (LFMLSLCLVPTFAVSCLLLGL). At 1161–1168 (DLRSGLLN) the chain is on the cytoplasmic side. Residues 1169-1189 (LLSIVMILVDTVGFMALWGIS) form a helical membrane-spanning segment. Over 1190 to 1191 (YN) the chain is Extracellular. The chain crosses the membrane as a helical span at residues 1192-1212 (AVSLINLVSAVGMSVEFVSHI). Topologically, residues 1213–1236 (TRSFAISTKPTWLERAKEATISMG) are cytoplasmic. The helical transmembrane segment at 1237 to 1257 (SAVFAGVAMTNLPGILVLGLA) threads the bilayer. Topologically, residues 1258–1268 (KAQLIQIFFFR) are extracellular. Residues 1269–1289 (LNLLITLLGLLHGLVFLPVIL) form a helical membrane-spanning segment. The Cytoplasmic portion of the chain corresponds to 1290–1359 (SYVGPDVNPA…NFLPNNGRQF (70 aa)).

Belongs to the patched family. Interacts with RAB11A, MYO5B and RAB11FIP2. Interaction with RAB11A, MYO5B and RAB11FIP2 is required for proper transport to the plasma membrane upon cholesterol depletion. Interacts with NPC2. Interacts with LIMA1. Highly glycosylated. As to expression, widely expressed. Expressed in liver. Also expressed in small intestine, pancreas, kidney, lung, pancreas, spleen, heart, gall bladder, brain, testis, stomach and muscle.

It localises to the apical cell membrane. It is found in the cell membrane. The protein resides in the cytoplasmic vesicle membrane. It carries out the reaction cholesterol(in) = cholesterol(out). It catalyses the reaction sitosterol(out) = sitosterol(in). Its function is as follows. Plays a major role in cholesterol homeostasis. Critical for the uptake of cholesterol across the plasma membrane of the intestinal enterocyte. Involved in plant sterol absorption, it transports sitosterol, although at lower rates than cholesterol. Is the direct molecular target of ezetimibe, a drug that inhibits cholesterol absorption and is approved for the treatment of hypercholesterolemia. May have a function in the transport of multiple lipids and their homeostasis, thereby influencing lipid metabolism regulation. May be involved in caveolin trafficking from the plasma membrane. In addition, acts as a negative regulator of NPC2 and down-regulates its expression and secretion by inhibiting its maturation and accelerating its degradation. This chain is NPC1-like intracellular cholesterol transporter 1, found in Homo sapiens (Human).